Here is a 391-residue protein sequence, read N- to C-terminus: Heme A synthase (391 aa).

8 helical membrane-spanning segments follow: residues 37-57, 121-141, 152-172, 186-206, 229-249, 298-318, 332-352, and 354-374; these read IRLW…VGGL, RQLG…FLAA, LLAL…MVAS, LATH…QALL, TTVL…VAGI, FLHR…WIFG, LLAM…LSAA, and WQVA…ILHA. His-300 provides a ligand contact to heme. His-360 is a heme binding site.

The protein belongs to the COX15/CtaA family. Type 2 subfamily. In terms of assembly, interacts with CtaB. Heme b is required as a cofactor.

Its subcellular location is the cell membrane. It catalyses the reaction Fe(II)-heme o + 2 A + H2O = Fe(II)-heme a + 2 AH2. Its pathway is porphyrin-containing compound metabolism; heme A biosynthesis; heme A from heme O: step 1/1. Functionally, catalyzes the conversion of heme O to heme A by two successive hydroxylations of the methyl group at C8. The first hydroxylation forms heme I, the second hydroxylation results in an unstable dihydroxymethyl group, which spontaneously dehydrates, resulting in the formyl group of heme A. This chain is Heme A synthase, found in Cereibacter sphaeroides (strain ATCC 17023 / DSM 158 / JCM 6121 / CCUG 31486 / LMG 2827 / NBRC 12203 / NCIMB 8253 / ATH 2.4.1.) (Rhodobacter sphaeroides).